The chain runs to 327 residues: Spermidine/putrescine import ATP-binding protein PotA (327 aa).

The 231-residue stretch at 5-235 (IKVEAVEKHF…PKTLFVATFI (231 aa)) folds into the ABC transporter domain. 37–44 (GPSGCGKT) contacts ATP.

The protein belongs to the ABC transporter superfamily. Spermidine/putrescine importer (TC 3.A.1.11.1) family. In terms of assembly, the complex is composed of two ATP-binding proteins (PotA), two transmembrane proteins (PotB and PotC) and a solute-binding protein (PotD).

Its subcellular location is the cell membrane. The enzyme catalyses ATP + H2O + polyamine-[polyamine-binding protein]Side 1 = ADP + phosphate + polyamineSide 2 + [polyamine-binding protein]Side 1.. Its function is as follows. Part of the ABC transporter complex PotABCD involved in spermidine/putrescine import. Responsible for energy coupling to the transport system. This Bacillus thuringiensis (strain Al Hakam) protein is Spermidine/putrescine import ATP-binding protein PotA.